The chain runs to 180 residues: ADP-ribosylation factor 4 (180 aa).

Gly2 carries the N-myristoyl glycine lipid modification. Residues 24 to 31, 67 to 71, and 126 to 129 each bind GTP; these read GLDAAGKT, DVGGQ, and NKQD. A Phosphoserine modification is found at Ser147.

The protein belongs to the small GTPase superfamily. Arf family. In terms of assembly, forms a complex containing RAB11A, ASAP1, RAB3IP, RAP11FIP3 and ARF4; the complex promotes preciliary trafficking; the complex binds to RHO in photoreceptor cells and promotes RHO ciliary transport.

It localises to the golgi apparatus. Its subcellular location is the membrane. Functionally, GTP-binding protein that functions as an allosteric activator of the cholera toxin catalytic subunit, an ADP-ribosyltransferase. Involved in protein trafficking; may modulate vesicle budding and uncoating within the Golgi apparatus. Part of the ciliary targeting complex containing Rab11, ASAP1, Rabin8/RAB3IP, RAB11FIP3 and ARF4, which direct preciliary vesicle trafficking to mother centriole and ciliogenesis initiation. This is ADP-ribosylation factor 4 (Arf4) from Mus musculus (Mouse).